The sequence spans 634 residues: DNA-directed RNA polymerase subunit gamma (634 aa).

The Zn(2+) site is built by Cys74, Cys76, Cys89, and Cys92. Asp471, Asp473, and Asp475 together coordinate Mg(2+).

This sequence belongs to the RNA polymerase beta' chain family. RpoC1 subfamily. As to quaternary structure, in cyanobacteria the RNAP catalytic core is composed of 2 alpha, 1 beta, 1 beta', 1 gamma and 1 omega subunit. When a sigma factor is associated with the core the holoenzyme is formed, which can initiate transcription. Mg(2+) serves as cofactor. Zn(2+) is required as a cofactor.

The enzyme catalyses RNA(n) + a ribonucleoside 5'-triphosphate = RNA(n+1) + diphosphate. Its function is as follows. DNA-dependent RNA polymerase catalyzes the transcription of DNA into RNA using the four ribonucleoside triphosphates as substrates. In Synechococcus sp. (strain CC9902), this protein is DNA-directed RNA polymerase subunit gamma.